A 736-amino-acid chain; its full sequence is Phosphoribosylformylglycinamidine synthase subunit PurL (736 aa).

His-49 is an active-site residue. ATP contacts are provided by Tyr-52 and Lys-91. Glu-93 provides a ligand contact to Mg(2+). Substrate is bound by residues 94-97 (SHNH) and Arg-116. Catalysis depends on His-95, which acts as the Proton acceptor. Asp-117 contributes to the Mg(2+) binding site. Gln-240 lines the substrate pocket. Mg(2+) is bound at residue Asp-268. 312–314 (ESQ) is a binding site for substrate. The ATP site is built by Asp-493 and Gly-530. Asn-531 is a binding site for Mg(2+). A substrate-binding site is contributed by Ser-533.

Belongs to the FGAMS family. Monomer. Part of the FGAM synthase complex composed of 1 PurL, 1 PurQ and 2 PurS subunits.

It localises to the cytoplasm. The enzyme catalyses N(2)-formyl-N(1)-(5-phospho-beta-D-ribosyl)glycinamide + L-glutamine + ATP + H2O = 2-formamido-N(1)-(5-O-phospho-beta-D-ribosyl)acetamidine + L-glutamate + ADP + phosphate + H(+). It participates in purine metabolism; IMP biosynthesis via de novo pathway; 5-amino-1-(5-phospho-D-ribosyl)imidazole from N(2)-formyl-N(1)-(5-phospho-D-ribosyl)glycinamide: step 1/2. Its function is as follows. Part of the phosphoribosylformylglycinamidine synthase complex involved in the purines biosynthetic pathway. Catalyzes the ATP-dependent conversion of formylglycinamide ribonucleotide (FGAR) and glutamine to yield formylglycinamidine ribonucleotide (FGAM) and glutamate. The FGAM synthase complex is composed of three subunits. PurQ produces an ammonia molecule by converting glutamine to glutamate. PurL transfers the ammonia molecule to FGAR to form FGAM in an ATP-dependent manner. PurS interacts with PurQ and PurL and is thought to assist in the transfer of the ammonia molecule from PurQ to PurL. This is Phosphoribosylformylglycinamidine synthase subunit PurL from Rhodopseudomonas palustris (strain HaA2).